The following is a 790-amino-acid chain: Nitrogen permease reactivator protein (790 aa).

The interval Met1–Pro68 is disordered. Residues Thr16–Asp38 show a composition bias toward polar residues. The span at Ser46–Ser58 shows a compositional bias: low complexity. At Ser47 the chain carries Phosphoserine; by autocatalysis. Ser85, Ser90, Ser100, Ser111, Ser116, Ser125, Ser137, and Ser141 each carry phosphoserine. Residues Arg151 to Pro175 are compositionally biased toward polar residues. 2 disordered regions span residues Arg151–Ser188 and Leu234–Phe258. A compositionally biased stretch (low complexity) spans Asn176–Ser188. Polar residues predominate over residues Ser238–Gln248. A compositionally biased stretch (low complexity) spans Ser249–Phe258. Ser257 carries the phosphoserine; by autocatalysis modification. Phosphoserine is present on residues Ser259, Ser260, Ser288, Ser292, Ser317, Ser320, and Ser328. Low complexity predominate over residues Asn276–Asn289. The tract at residues Asn276–Ser357 is disordered. Polar residues-rich tracts occupy residues Gly290 to Thr305, Arg314 to Ser339, and Pro346 to Ser357. Tyr334 carries the post-translational modification Phosphotyrosine. Phosphoserine occurs at positions 336, 353, and 356. Ser357 carries the phosphoserine; by autocatalysis modification. Residue Ser385 is modified to Phosphoserine. A Protein kinase domain is found at Ile438–Ile742. Residues Leu444–Val452 and Lys467 each bind ATP. Residue Asp561 is the Proton acceptor of the active site. Disordered regions lie at residues Leu666 to Pro704 and His766 to Gln790. Residues Asp677–Glu688 show a composition bias toward basic and acidic residues. Residues Ser689 to Asn701 show a composition bias toward low complexity.

This sequence belongs to the protein kinase superfamily. Ser/Thr protein kinase family. As to quaternary structure, interacts with TIP41. Post-translationally, hyperphosphorylated in nitrogen-rich growth medium. Nitrogen limitation (or rapamycin treatment) leads to substantial, though not complete dephosphorylation. Autophosphorylation plays only a minor role and seems not to be regulated by the quality of the nitrogen source.

The protein resides in the cytoplasm. It carries out the reaction L-seryl-[protein] + ATP = O-phospho-L-seryl-[protein] + ADP + H(+). It catalyses the reaction L-threonyl-[protein] + ATP = O-phospho-L-threonyl-[protein] + ADP + H(+). With respect to regulation, dephosphorylation by SIT4 activates NPR1 kinase activity. Nutrient-regulated protein kinase that promotes the activity of at least 6 distinct transport systems for nitrogenous nutrients under conditions of nitrogen catabolite derepression. Under poor nitrogen growth conditions, required for post-Golgi sorting of the general amino acid permease GAP1 and the three known ammonia permeases, MEP1/2/3, to the plasma membrane. Also contributes to the stability and the retention of GAP1 at the plasma membrane. Inversely, promotes the degradation of tryptophan permease TAT2 under the same conditions. Activity is regulated by the TOR signaling pathway via phosphatase SIT4. Although thought to be involved in regulation of GLN3-dependent transcription by nitrogen catabolite repression, this seems to be an indirect effect from the reduced uptake of the nitrogen-repressing compound. This Saccharomyces cerevisiae (strain ATCC 204508 / S288c) (Baker's yeast) protein is Nitrogen permease reactivator protein (NPR1).